The following is a 345-amino-acid chain: MDDNRKKALTAALSQIERQFGKGAVMRMGEQPREIIPSVSTGSLGLDIALGIGGLPYGRIVEIYGPESSGKTTLTLQVIAEAQRQGKTCAFVDAEHALDPIYAEKLGVNIDQLLVSQPDTGEQALEIADMLVRSGAVDVIIIDSVAALTPKAEIEGEMGDSHVGLQARLMSQALRKLTGSVKQANCLMIFINQIRMKIGVMFGSPETTTGGNALKFYASVRLDIRRVGSVKEGEEVVGNETRVKVVKNKVSPPFKQADFQIMYGRGIYRTGEIIDLGVKEGFVDKSGAWYSYKGDKIGQGKANSSRYLEEHPEIAVEIETAIREKLMPKTPVKEKEAPVAPVEAE.

65-72 is an ATP binding site; it reads GPESSGKT.

This sequence belongs to the RecA family.

The protein localises to the cytoplasm. Its function is as follows. Can catalyze the hydrolysis of ATP in the presence of single-stranded DNA, the ATP-dependent uptake of single-stranded DNA by duplex DNA, and the ATP-dependent hybridization of homologous single-stranded DNAs. It interacts with LexA causing its activation and leading to its autocatalytic cleavage. The chain is Protein RecA from Hahella chejuensis (strain KCTC 2396).